We begin with the raw amino-acid sequence, 409 residues long: Peptidase T (409 aa).

Zn(2+) is bound at residue His78. Asp80 is an active-site residue. Residue Asp140 coordinates Zn(2+). The Proton acceptor role is filled by Glu173. Glu174, Asp196, and His379 together coordinate Zn(2+).

This sequence belongs to the peptidase M20B family. Zn(2+) is required as a cofactor.

It is found in the cytoplasm. It carries out the reaction Release of the N-terminal residue from a tripeptide.. Cleaves the N-terminal amino acid of tripeptides. In Salmonella choleraesuis (strain SC-B67), this protein is Peptidase T.